Here is a 689-residue protein sequence, read N- to C-terminus: Glycine--tRNA ligase beta subunit (689 aa).

This sequence belongs to the class-II aminoacyl-tRNA synthetase family. As to quaternary structure, tetramer of two alpha and two beta subunits.

It is found in the cytoplasm. The catalysed reaction is tRNA(Gly) + glycine + ATP = glycyl-tRNA(Gly) + AMP + diphosphate. This Mannheimia succiniciproducens (strain KCTC 0769BP / MBEL55E) protein is Glycine--tRNA ligase beta subunit.